Here is a 331-residue protein sequence, read N- to C-terminus: Ketol-acid reductoisomerase (NADP(+)) (331 aa).

Residues isoleucine 2–threonine 182 form the KARI N-terminal Rossmann domain. NADP(+)-binding positions include tyrosine 25–glutamine 28, arginine 48, and serine 51. The active site involves histidine 108. Glycine 134 serves as a coordination point for NADP(+). The KARI C-terminal knotted domain maps to threonine 183 to isoleucine 329. Positions 191, 195, 227, and 231 each coordinate Mg(2+). Serine 252 serves as a coordination point for substrate.

This sequence belongs to the ketol-acid reductoisomerase family. Mg(2+) is required as a cofactor.

The catalysed reaction is (2R)-2,3-dihydroxy-3-methylbutanoate + NADP(+) = (2S)-2-acetolactate + NADPH + H(+). It catalyses the reaction (2R,3R)-2,3-dihydroxy-3-methylpentanoate + NADP(+) = (S)-2-ethyl-2-hydroxy-3-oxobutanoate + NADPH + H(+). Its pathway is amino-acid biosynthesis; L-isoleucine biosynthesis; L-isoleucine from 2-oxobutanoate: step 2/4. The protein operates within amino-acid biosynthesis; L-valine biosynthesis; L-valine from pyruvate: step 2/4. In terms of biological role, involved in the biosynthesis of branched-chain amino acids (BCAA). Catalyzes an alkyl-migration followed by a ketol-acid reduction of (S)-2-acetolactate (S2AL) to yield (R)-2,3-dihydroxy-isovalerate. In the isomerase reaction, S2AL is rearranged via a Mg-dependent methyl migration to produce 3-hydroxy-3-methyl-2-ketobutyrate (HMKB). In the reductase reaction, this 2-ketoacid undergoes a metal-dependent reduction by NADPH to yield (R)-2,3-dihydroxy-isovalerate. In Brachyspira hyodysenteriae (strain ATCC 49526 / WA1), this protein is Ketol-acid reductoisomerase (NADP(+)).